Here is a 170-residue protein sequence, read N- to C-terminus: Siroheme decarboxylase NirL subunit (170 aa).

It belongs to the Ahb/Nir family. As to quaternary structure, probably forms a complex composed of NirD, NirL, NirG and NirH. All proteins are required for the total conversion of siroheme to didecarboxysiroheme.

The catalysed reaction is siroheme + 2 H(+) = 12,18-didecarboxysiroheme + 2 CO2. The protein operates within porphyrin-containing compound metabolism. Involved in heme d1 biosynthesis. Catalyzes the decarboxylation of siroheme into didecarboxysiroheme. The sequence is that of Siroheme decarboxylase NirL subunit from Stutzerimonas stutzeri (Pseudomonas stutzeri).